The primary structure comprises 962 residues: MTKQTLTQLEQHELFLTRHIGPNAEQQQEMLNFIGAESLEDLTAQTVPGKIRLPQDLTIGDSCGEAEGIAYIRNIADKNKVFKSYIGMGYYGVQVPNVILRNVFENPGWYTAYTPYQPEIAQGRLEAILNFQQVSMDLTGLDLASASLLDEATAAAEAMALAKRVSKAKKANIFFVADDVFPQTLDVVKTRAECFGFEVVVGPASEAVNYELFGALFQYTNRIGQITDYTELFATLRDNKVIVTVAADIMSLMLLKSPGAMGADVVFGSAQRFGVPMGYGGPHAAFFVARDEHKRSMPGRIIGVSKDTRGNSALRMAMQTREQHIRREKANSNICTAQILLANMASFYAVFHGPQGLKTIASRINRLADILAAGLTAKGLTLANTTWFDTISVKGADVAAINARAIAAQVNLRIDADGVFGISLDETTIRTDIADLFDVILGAGHGLDVATFDADIVANGSQSIPDALVRQDAVLTHPTFNRYQSETEMMRYIKRLENKDLALNHSMISLGSCTMKLNAAVEMLPVSWPEFANMHPFCPLDQAQGYTQLINELSEFLVKITGYDSVCIQPNSGAQGEYAGLLAIKKYHESRGDAHRNICLIPQSAHGTNPASAQLAGMKVVVTACDKQGNVDLEDLRTKAAELADSLSCIMITYPSTHGVYEESIREVCEIVHQYGGQVYLDGANMNAQVGLTSPGFIGADVSHLNLHKTFAIPHGGGGPGMGPIGVKSHLAPFVAGHTVIKPGRESDHNGAVSAAPYGSASILPISWMYIKLLGTKGVKQSTQTALLNANYIMKKLSAHYPVLFTGRNDRVAHECIIDLRPLKETSGVTEMDIAKRLNDYGFHSPTMSFPVAGTLMIEPTESESKVELDRFIEAMISIRGEITKVEAGEWPVDNNPLHNAPHTLADIMDPEFDSRPYSREVAVFPTAAVKANKFWPTVNRIDDVYGDRNLMCSCVPLSDYE.

N6-(pyridoxal phosphate)lysine is present on Lys709.

This sequence belongs to the GcvP family. In terms of assembly, the glycine cleavage system is composed of four proteins: P, T, L and H. It depends on pyridoxal 5'-phosphate as a cofactor.

It carries out the reaction N(6)-[(R)-lipoyl]-L-lysyl-[glycine-cleavage complex H protein] + glycine + H(+) = N(6)-[(R)-S(8)-aminomethyldihydrolipoyl]-L-lysyl-[glycine-cleavage complex H protein] + CO2. In terms of biological role, the glycine cleavage system catalyzes the degradation of glycine. The P protein binds the alpha-amino group of glycine through its pyridoxal phosphate cofactor; CO(2) is released and the remaining methylamine moiety is then transferred to the lipoamide cofactor of the H protein. The chain is Glycine dehydrogenase (decarboxylating) from Shewanella frigidimarina (strain NCIMB 400).